Consider the following 492-residue polypeptide: 2-succinylbenzoate--CoA ligase (492 aa).

The protein belongs to the ATP-dependent AMP-binding enzyme family. MenE subfamily.

The enzyme catalyses 2-succinylbenzoate + ATP + CoA = 2-succinylbenzoyl-CoA + AMP + diphosphate. The protein operates within quinol/quinone metabolism; 1,4-dihydroxy-2-naphthoate biosynthesis; 1,4-dihydroxy-2-naphthoate from chorismate: step 5/7. It participates in quinol/quinone metabolism; menaquinone biosynthesis. Functionally, converts 2-succinylbenzoate (OSB) to 2-succinylbenzoyl-CoA (OSB-CoA). This chain is 2-succinylbenzoate--CoA ligase, found in Geobacillus sp. (strain WCH70).